An 86-amino-acid chain; its full sequence is Neurotoxin 3FTx-RK (86 aa).

Positions 1–21 are cleaved as a signal peptide; sequence MKTLLLTLVVVTIVCLELGYT. Disulfide bonds link Cys24/Cys45, Cys38/Cys63, Cys67/Cys78, and Cys79/Cys84.

Expressed by the venom gland.

It localises to the secreted. The sequence is that of Neurotoxin 3FTx-RK from Bungarus fasciatus (Banded krait).